The following is a 389-amino-acid chain: Probable DNA double-strand break repair nuclease NurA (389 aa).

Mn(2+)-binding residues include aspartate 74 and aspartate 151.

The protein belongs to the NurA family. Requires Mn(2+) as cofactor.

In terms of biological role, involved in DNA double-strand break (DSB) repair. Probably acts with HerA to stimulate resection of the 5' strand and produce the long 3' single-strand that is required for RadA loading. This chain is Probable DNA double-strand break repair nuclease NurA, found in Methanocaldococcus jannaschii (strain ATCC 43067 / DSM 2661 / JAL-1 / JCM 10045 / NBRC 100440) (Methanococcus jannaschii).